Reading from the N-terminus, the 184-residue chain is V-type proton ATPase subunit E (184 aa).

This sequence belongs to the V-ATPase E subunit family.

Functionally, produces ATP from ADP in the presence of a proton gradient across the membrane. This chain is V-type proton ATPase subunit E, found in Finegoldia magna (strain ATCC 29328 / DSM 20472 / WAL 2508) (Peptostreptococcus magnus).